Here is a 93-residue protein sequence, read N- to C-terminus: Large ribosomal subunit protein uL23 (93 aa).

The protein belongs to the universal ribosomal protein uL23 family. Part of the 50S ribosomal subunit. Contacts protein L29, and trigger factor when it is bound to the ribosome.

Functionally, one of the early assembly proteins it binds 23S rRNA. One of the proteins that surrounds the polypeptide exit tunnel on the outside of the ribosome. Forms the main docking site for trigger factor binding to the ribosome. This is Large ribosomal subunit protein uL23 from Natranaerobius thermophilus (strain ATCC BAA-1301 / DSM 18059 / JW/NM-WN-LF).